We begin with the raw amino-acid sequence, 423 residues long: MSEDKDYMSEPFIVKKIDDEESLLDDYNPQGNTSFSKTCFHGINALSGVGILSVPYALASGGWLSLIILFTVAITTFYCAILIKRCMEMDPLLRSYPDIGYKAFGNTGRVIVSIFMNLELYLVATSFLILEGDNLNKLFSNVGLNFMGLEFQGKQMFIIMVALIILPSVWLDNMRILSYVSASGVFASGVILASIFSVGAFEGVGFKNNDSEVFRLNGVATSVSLYAFCYCAHPVFPTLYTSMKNKRQFSNVMIICFTICTFIYASVAVLGYLMYGSDVESQITLNLPTDKLSSKVAIWTTLVNPIAKFALMVTPIIDAMRSRFSRVLPNKRASGFLLSTILVTSNVIVALLLPFFGDLMSLVGAFLSASASVILPCLCYLKISGKYQRLGFETLVLIGITLTGIVVVITGTYQAVKDIFGRF.

The next 11 membrane-spanning stretches (helical) occupy residues 39–59 (CFHGINALSGVGILSVPYALA), 63–83 (WLSLIILFTVAITTFYCAILI), 110–130 (VIVSIFMNLELYLVATSFLIL), 151–171 (FQGKQMFIIMVALIILPSVWL), 186–206 (FASGVILASIFSVGAFEGVGF), 219–239 (VATSVSLYAFCYCAHPVFPTL), 252–272 (VMIICFTICTFIYASVAVLGY), 297–317 (AIWTTLVNPIAKFALMVTPII), 333–355 (ASGFLLSTILVTSNVIVALLLPF), 359–381 (LMSLVGAFLSASASVILPCLCYL), and 390–410 (LGFETLVLIGITLTGIVVVIT).

It belongs to the amino acid/polyamine transporter 2 family. Amino acid/auxin permease (AAAP) (TC 2.A.18.5) subfamily.

The protein resides in the membrane. In Arabidopsis thaliana (Mouse-ear cress), this protein is Amino acid transporter AVT1J.